We begin with the raw amino-acid sequence, 553 residues long: Cytochrome P450 86A2 (553 aa).

Residues 2 to 20 form a helical membrane-spanning segment; sequence DVSNTMLLVAVVAAYWLWF. Cys459 contributes to the heme binding site.

The protein belongs to the cytochrome P450 family. Heme is required as a cofactor. Expressed in leaves, stems, flowers and siliques. Expressed at low levels in roots. Expressed in guard cells of cotyledons and leaves.

It localises to the membrane. The catalysed reaction is an organic molecule + reduced [NADPH--hemoprotein reductase] + O2 = an alcohol + oxidized [NADPH--hemoprotein reductase] + H2O + H(+). In terms of biological role, catalyzes the omega-hydroxylation of various fatty acids (FA). Acts on saturated and unsaturated fatty acids with chain lengths from C12 to C18. Plays a major role in the biosynthesis of extracellular lipids. Involved in the biosynthesis of hydroxylated fatty acids required for cutin biosynthesis, cuticle development and repression of bacterial type III gene expression. The sequence is that of Cytochrome P450 86A2 (CYP86A2) from Arabidopsis thaliana (Mouse-ear cress).